The sequence spans 360 residues: Probable butyrate kinase (360 aa).

This sequence belongs to the acetokinase family.

It localises to the cytoplasm. It carries out the reaction butanoate + ATP = butanoyl phosphate + ADP. The polypeptide is Probable butyrate kinase (Enterococcus faecalis (strain ATCC 700802 / V583)).